The sequence spans 243 residues: Large ribosomal subunit protein uL3 (243 aa).

Disordered stretches follow at residues 139-164 and 218-243; these read VSHR…KMPG and KPGK…GEGA. Gln151 is subject to N5-methylglutamine. Over residues 218–229 the composition is skewed to basic and acidic residues; that stretch reads KPGKFKLADGGD. A compositionally biased stretch (low complexity) spans 230 to 243; the sequence is KAAAAPEATAGEGA.

This sequence belongs to the universal ribosomal protein uL3 family. As to quaternary structure, part of the 50S ribosomal subunit. Forms a cluster with proteins L14 and L19. Methylated by PrmB.

One of the primary rRNA binding proteins, it binds directly near the 3'-end of the 23S rRNA, where it nucleates assembly of the 50S subunit. This Afipia carboxidovorans (strain ATCC 49405 / DSM 1227 / KCTC 32145 / OM5) (Oligotropha carboxidovorans) protein is Large ribosomal subunit protein uL3.